The following is a 663-amino-acid chain: Bifunctional polymyxin resistance protein ArnA (663 aa).

Residues 1 to 307 (MSSKAVVFAY…ELGLVDGSVL (307 aa)) form a formyltransferase ArnAFT region. The Proton donor; for formyltransferase activity role is filled by His106. (6R)-10-formyltetrahydrofolate is bound by residues Arg116 and 138 to 142 (VKRAD). The dehydrogenase ArnADH stretch occupies residues 317-663 (RRTRVLILGV…EAMLEIADKK (347 aa)). Residues Asp350 and 371–372 (DI) each bind NAD(+). Residues Ala396, Tyr401, and 435–436 (TS) contribute to the UDP-alpha-D-glucuronate site. Glu437 acts as the Proton acceptor; for decarboxylase activity in catalysis. Residues Arg463, Asn494, 528-537 (RLFDGGEQKR), and Tyr615 each bind UDP-alpha-D-glucuronate. Arg621 serves as the catalytic Proton donor; for decarboxylase activity.

The protein in the N-terminal section; belongs to the Fmt family. UDP-L-Ara4N formyltransferase subfamily. In the C-terminal section; belongs to the NAD(P)-dependent epimerase/dehydratase family. UDP-glucuronic acid decarboxylase subfamily. In terms of assembly, homohexamer, formed by a dimer of trimers.

The enzyme catalyses UDP-alpha-D-glucuronate + NAD(+) = UDP-beta-L-threo-pentopyranos-4-ulose + CO2 + NADH. It catalyses the reaction UDP-4-amino-4-deoxy-beta-L-arabinose + (6R)-10-formyltetrahydrofolate = UDP-4-deoxy-4-formamido-beta-L-arabinose + (6S)-5,6,7,8-tetrahydrofolate + H(+). It functions in the pathway nucleotide-sugar biosynthesis; UDP-4-deoxy-4-formamido-beta-L-arabinose biosynthesis; UDP-4-deoxy-4-formamido-beta-L-arabinose from UDP-alpha-D-glucuronate: step 1/3. The protein operates within nucleotide-sugar biosynthesis; UDP-4-deoxy-4-formamido-beta-L-arabinose biosynthesis; UDP-4-deoxy-4-formamido-beta-L-arabinose from UDP-alpha-D-glucuronate: step 3/3. It participates in bacterial outer membrane biogenesis; lipopolysaccharide biosynthesis. Functionally, bifunctional enzyme that catalyzes the oxidative decarboxylation of UDP-glucuronic acid (UDP-GlcUA) to UDP-4-keto-arabinose (UDP-Ara4O) and the addition of a formyl group to UDP-4-amino-4-deoxy-L-arabinose (UDP-L-Ara4N) to form UDP-L-4-formamido-arabinose (UDP-L-Ara4FN). The modified arabinose is attached to lipid A and is required for resistance to polymyxin and cationic antimicrobial peptides. This Pseudomonas fluorescens (strain SBW25) protein is Bifunctional polymyxin resistance protein ArnA.